We begin with the raw amino-acid sequence, 141 residues long: Large ribosomal subunit protein uL11 (141 aa).

This sequence belongs to the universal ribosomal protein uL11 family. As to quaternary structure, part of the ribosomal stalk of the 50S ribosomal subunit. Interacts with L10 and the large rRNA to form the base of the stalk. L10 forms an elongated spine to which L12 dimers bind in a sequential fashion forming a multimeric L10(L12)X complex. Post-translationally, one or more lysine residues are methylated.

Its function is as follows. Forms part of the ribosomal stalk which helps the ribosome interact with GTP-bound translation factors. This chain is Large ribosomal subunit protein uL11, found in Gloeobacter violaceus (strain ATCC 29082 / PCC 7421).